The primary structure comprises 356 residues: uncharacterized protein (356 aa).

This is an uncharacterized protein from Acanthamoeba polyphaga (Amoeba).